Reading from the N-terminus, the 398-residue chain is Large ribosomal subunit protein uL3 (398 aa).

A compositionally biased stretch (basic and acidic residues) spans 1–10; the sequence is MSHRKFEAPR. The segment at 1 to 34 is disordered; the sequence is MSHRKFEAPRHGNLGFRPRKRAARHQGKVKSFPK. The segment covering 17–28 has biased composition (basic residues); sequence RPRKRAARHQGK.

The protein belongs to the universal ribosomal protein uL3 family.

The protein localises to the cytoplasm. Functionally, the L3 protein is a component of the large subunit of cytoplasmic ribosomes. The polypeptide is Large ribosomal subunit protein uL3 (rpl3) (Dictyostelium discoideum (Social amoeba)).